The primary structure comprises 673 residues: Beta-galactosidase 8 (673 aa).

Positions 1 to 20 (MGPSRSFQNLLLLLLPLALA) are cleaved as a signal peptide. Asparagine 38 carries N-linked (GlcNAc...) asparagine glycosylation. Glutamate 189 serves as the catalytic Proton donor. Asparagine 230 carries N-linked (GlcNAc...) asparagine glycosylation. Residue glutamate 272 is the Nucleophile of the active site. Residues asparagine 304, asparagine 329, asparagine 401, asparagine 489, and asparagine 540 are each glycosylated (N-linked (GlcNAc...) asparagine).

Belongs to the glycosyl hydrolase 35 family.

Its subcellular location is the secreted. The protein localises to the extracellular space. It localises to the apoplast. It carries out the reaction Hydrolysis of terminal non-reducing beta-D-galactose residues in beta-D-galactosides.. In Oryza sativa subsp. japonica (Rice), this protein is Beta-galactosidase 8.